The primary structure comprises 460 residues: Cysteine--tRNA ligase (460 aa).

Cysteine 28 provides a ligand contact to Zn(2+). Residues 30 to 40 (VTIYDLCHIGH) carry the 'HIGH' region motif. Residues cysteine 209, histidine 234, and glutamate 238 each contribute to the Zn(2+) site. The short motif at 266-270 (KMSKS) is the 'KMSKS' region element. Lysine 269 contacts ATP.

This sequence belongs to the class-I aminoacyl-tRNA synthetase family. As to quaternary structure, monomer. Requires Zn(2+) as cofactor.

The protein resides in the cytoplasm. It catalyses the reaction tRNA(Cys) + L-cysteine + ATP = L-cysteinyl-tRNA(Cys) + AMP + diphosphate. In Vibrio vulnificus (strain YJ016), this protein is Cysteine--tRNA ligase.